The primary structure comprises 234 residues: Large ribosomal subunit protein uL1 (234 aa).

Belongs to the universal ribosomal protein uL1 family. As to quaternary structure, part of the 50S ribosomal subunit.

In terms of biological role, binds directly to 23S rRNA. The L1 stalk is quite mobile in the ribosome, and is involved in E site tRNA release. Functionally, protein L1 is also a translational repressor protein, it controls the translation of the L11 operon by binding to its mRNA. This Serratia marcescens protein is Large ribosomal subunit protein uL1.